Consider the following 347-residue polypeptide: Protein RecA (347 aa).

64-71 (GPESSGKT) serves as a coordination point for ATP.

The protein belongs to the RecA family.

It is found in the cytoplasm. Can catalyze the hydrolysis of ATP in the presence of single-stranded DNA, the ATP-dependent uptake of single-stranded DNA by duplex DNA, and the ATP-dependent hybridization of homologous single-stranded DNAs. It interacts with LexA causing its activation and leading to its autocatalytic cleavage. The chain is Protein RecA from Bartonella henselae (strain ATCC 49882 / DSM 28221 / CCUG 30454 / Houston 1) (Rochalimaea henselae).